The primary structure comprises 411 residues: UPF0761 membrane protein PLES_43641 (411 aa).

Helical transmembrane passes span 36–56 (LFAV…IPAF), 92–112 (HLTW…LVTI), 132–152 (FLLY…GFAV), 174–194 (LLGL…YSAV), 207–229 (GGVF…VSLF), and 244–264 (IFLL…VLVC).

This sequence belongs to the UPF0761 family.

The protein localises to the cell inner membrane. In Pseudomonas aeruginosa (strain LESB58), this protein is UPF0761 membrane protein PLES_43641.